Here is a 262-residue protein sequence, read N- to C-terminus: uncharacterized protein (262 aa).

In terms of domain architecture, Radical SAM core spans 1-211; that stretch reads MAFHVMIIPS…LLYLLDSYLE (211 aa). Cys13, Cys17, and Cys20 together coordinate [4Fe-4S] cluster.

The protein belongs to the radical SAM superfamily. Anaerobic sulfatase-maturating enzyme family. The cofactor is [4Fe-4S] cluster.

This is an uncharacterized protein from Methanothermobacter thermautotrophicus (strain ATCC 29096 / DSM 1053 / JCM 10044 / NBRC 100330 / Delta H) (Methanobacterium thermoautotrophicum).